We begin with the raw amino-acid sequence, 857 residues long: Inactive rhomboid protein 1 (857 aa).

The Cytoplasmic segment spans residues 1–413; the sequence is MAELRRDSTS…HRPFFTYWIT (413 aa). The segment at 283–307 is disordered; that stretch reads FESPSDSTMKDVDSKQLDESELTGS. The segment covering 290–300 has biased composition (basic and acidic residues); the sequence is TMKDVDSKQLD. Residues 414-434 form a helical membrane-spanning segment; sequence FVHILITILAVCIYGIAPVGF. At 435-661 the chain is on the lumenal side; that stretch reads SQHETVDSVL…PDQFYRLWLS (227 aa). Residue asparagine 585 is glycosylated (N-linked (GlcNAc...) asparagine). A helical transmembrane segment spans residues 662–682; the sequence is LFLHAGILHCLVSVCFQMTIL. Residues 683-693 lie on the Cytoplasmic side of the membrane; sequence RDLEKLAGWLR. A helical transmembrane segment spans residues 694–714; the sequence is ISIIYILSGITGNLASAIFLP. Topologically, residues 715 to 716 are lumenal; the sequence is YR. The chain crosses the membrane as a helical span at residues 717 to 737; sequence AEVGPAGSQFGILACLFVELI. At 738 to 748 the chain is on the cytoplasmic side; that stretch reads QSWQILAQPWR. The chain crosses the membrane as a helical span at residues 749–769; sequence AFTKLLCVVLFLFAFGLLPWI. The Lumenal segment spans residues 770–774; sequence DNFAH. A helical membrane pass occupies residues 775–795; that stretch reads ISGFISGFFLSFAFLPYISFG. The Cytoplasmic portion of the chain corresponds to 796-805; it reads RLDMYRKRCQ. Residues 806 to 826 traverse the membrane as a helical segment; it reads IIIFLVVFLGLFAGLVVLFYV. Over 827–857 the chain is Lumenal; the sequence is HPIKCEWCELLTCIPFTDKFCEKYDLNAHLH.

Belongs to the peptidase S54 family.

It is found in the endoplasmic reticulum membrane. The protein resides in the golgi apparatus membrane. Functionally, regulates ADAM17 protease, a sheddase of the epidermal growth factor (EGF) receptor ligands and TNF, thereby plays a role in sleep, cell survival, proliferation, migration and inflammation. Does not exhibit any protease activity on its own. This Danio rerio (Zebrafish) protein is Inactive rhomboid protein 1 (rhbdf1).